The following is a 351-amino-acid chain: Probable dual-specificity RNA methyltransferase RlmN (351 aa).

Glutamate 92 serves as the catalytic Proton acceptor. The Radical SAM core domain maps to threonine 98 to aspartate 332. Cysteine 105 and cysteine 337 form a disulfide bridge. Cysteine 112, cysteine 116, and cysteine 119 together coordinate [4Fe-4S] cluster. S-adenosyl-L-methionine-binding positions include glycine 159–glutamate 160, serine 189, serine 218–histidine 220, and asparagine 294. Catalysis depends on cysteine 337, which acts as the S-methylcysteine intermediate.

The protein belongs to the radical SAM superfamily. RlmN family. It depends on [4Fe-4S] cluster as a cofactor.

It is found in the cytoplasm. The catalysed reaction is adenosine(2503) in 23S rRNA + 2 reduced [2Fe-2S]-[ferredoxin] + 2 S-adenosyl-L-methionine = 2-methyladenosine(2503) in 23S rRNA + 5'-deoxyadenosine + L-methionine + 2 oxidized [2Fe-2S]-[ferredoxin] + S-adenosyl-L-homocysteine. It carries out the reaction adenosine(37) in tRNA + 2 reduced [2Fe-2S]-[ferredoxin] + 2 S-adenosyl-L-methionine = 2-methyladenosine(37) in tRNA + 5'-deoxyadenosine + L-methionine + 2 oxidized [2Fe-2S]-[ferredoxin] + S-adenosyl-L-homocysteine. Specifically methylates position 2 of adenine 2503 in 23S rRNA and position 2 of adenine 37 in tRNAs. This Synechococcus sp. (strain CC9902) protein is Probable dual-specificity RNA methyltransferase RlmN.